Consider the following 544-residue polypeptide: CTP synthase (544 aa).

Residues 1 to 265 (MTKFIFVTGG…DNIITEQLQL (265 aa)) are amidoligase domain. Serine 13 contributes to the CTP binding site. Serine 13 contributes to the UTP binding site. ATP-binding positions include 14–19 (SLGKGI) and aspartate 71. Mg(2+) contacts are provided by aspartate 71 and glutamate 139. CTP-binding positions include 146–148 (DIE), 186–191 (KTKPTQ), and lysine 222. UTP is bound by residues 186-191 (KTKPTQ) and lysine 222. Positions 290 to 544 (KIAMVGKYVD…VKAALNNKKA (255 aa)) constitute a Glutamine amidotransferase type-1 domain. Glycine 353 contributes to the L-glutamine binding site. Catalysis depends on cysteine 380, which acts as the Nucleophile; for glutamine hydrolysis. Residues 381–384 (LGMQ), glutamate 404, and arginine 471 each bind L-glutamine. Active-site residues include histidine 517 and glutamate 519.

It belongs to the CTP synthase family. As to quaternary structure, homotetramer.

The enzyme catalyses UTP + L-glutamine + ATP + H2O = CTP + L-glutamate + ADP + phosphate + 2 H(+). It catalyses the reaction L-glutamine + H2O = L-glutamate + NH4(+). The catalysed reaction is UTP + NH4(+) + ATP = CTP + ADP + phosphate + 2 H(+). Its pathway is pyrimidine metabolism; CTP biosynthesis via de novo pathway; CTP from UDP: step 2/2. With respect to regulation, allosterically activated by GTP, when glutamine is the substrate; GTP has no effect on the reaction when ammonia is the substrate. The allosteric effector GTP functions by stabilizing the protein conformation that binds the tetrahedral intermediate(s) formed during glutamine hydrolysis. Inhibited by the product CTP, via allosteric rather than competitive inhibition. Functionally, catalyzes the ATP-dependent amination of UTP to CTP with either L-glutamine or ammonia as the source of nitrogen. Regulates intracellular CTP levels through interactions with the four ribonucleotide triphosphates. This Neisseria gonorrhoeae (strain ATCC 700825 / FA 1090) protein is CTP synthase.